The chain runs to 523 residues: Probable DNA ligase (523 aa).

E210 contacts ATP. Residue K212 is the N6-AMP-lysine intermediate of the active site. R217, R232, E261, F317, R388, and K394 together coordinate ATP.

This sequence belongs to the ATP-dependent DNA ligase family. It depends on Mg(2+) as a cofactor.

It carries out the reaction ATP + (deoxyribonucleotide)n-3'-hydroxyl + 5'-phospho-(deoxyribonucleotide)m = (deoxyribonucleotide)n+m + AMP + diphosphate.. Functionally, DNA ligase that seals nicks in double-stranded DNA during DNA replication, DNA recombination and DNA repair. The polypeptide is Probable DNA ligase (Nocardia farcinica (strain IFM 10152)).